Reading from the N-terminus, the 152-residue chain is 6,7-dimethyl-8-ribityllumazine synthase (152 aa).

Residues phenylalanine 21, 55-57 (AFE), and 79-81 (CVI) each bind 5-amino-6-(D-ribitylamino)uracil. (2S)-2-hydroxy-3-oxobutyl phosphate is bound at residue 84-85 (AT). Catalysis depends on histidine 87, which acts as the Proton donor. 5-amino-6-(D-ribitylamino)uracil is bound at residue phenylalanine 112. Arginine 126 is a (2S)-2-hydroxy-3-oxobutyl phosphate binding site.

This sequence belongs to the DMRL synthase family. In terms of assembly, forms an icosahedral capsid composed of 60 subunits, arranged as a dodecamer of pentamers.

It carries out the reaction (2S)-2-hydroxy-3-oxobutyl phosphate + 5-amino-6-(D-ribitylamino)uracil = 6,7-dimethyl-8-(1-D-ribityl)lumazine + phosphate + 2 H2O + H(+). The protein operates within cofactor biosynthesis; riboflavin biosynthesis; riboflavin from 2-hydroxy-3-oxobutyl phosphate and 5-amino-6-(D-ribitylamino)uracil: step 1/2. Functionally, catalyzes the formation of 6,7-dimethyl-8-ribityllumazine by condensation of 5-amino-6-(D-ribitylamino)uracil with 3,4-dihydroxy-2-butanone 4-phosphate. This is the penultimate step in the biosynthesis of riboflavin. This is 6,7-dimethyl-8-ribityllumazine synthase from Staphylococcus haemolyticus (strain JCSC1435).